The sequence spans 581 residues: Mitosis inhibitor protein kinase mik1 (581 aa).

2 disordered regions span residues 43–71 (GHEE…HTPM) and 148–178 (NLTN…PLSP). The segment covering 59-71 (KPSNTKRSPHTPM) has biased composition (polar residues). A compositionally biased stretch (basic residues) spans 160–169 (PCKKGTKIKL). One can recognise a Protein kinase domain in the interval 289 to 561 (FQQVKPIHES…LLAMPEMIFI (273 aa)). ATP contacts are provided by residues 295-303 (IHESDFSFV) and Lys-320. Asp-417 functions as the Proton acceptor in the catalytic mechanism. 2 residues coordinate Mg(2+): Asn-422 and Asp-435.

It belongs to the protein kinase superfamily. Ser/Thr protein kinase family. WEE1 subfamily.

It carries out the reaction L-seryl-[protein] + ATP = O-phospho-L-seryl-[protein] + ADP + H(+). The catalysed reaction is L-threonyl-[protein] + ATP = O-phospho-L-threonyl-[protein] + ADP + H(+). Protein kinase that acts both on serines and on tyrosines. It acts as a negative regulator of entry into mitosis (G2 to M transition). Phosphorylates and inhibits cdc2. The protein is Mitosis inhibitor protein kinase mik1 (mik1) of Schizosaccharomyces pombe (strain 972 / ATCC 24843) (Fission yeast).